Here is a 287-residue protein sequence, read N- to C-terminus: tRNA N(3)-cytidine methyltransferase METTL6 (287 aa).

Residues Trp45, Tyr49, Gly87, Asp110, Asp136, Leu137, and Ile157 each contribute to the S-adenosyl-L-methionine site. Residues 267-287 are disordered; the sequence is RKPPKDPAPTTDSASLLRKEF.

The protein belongs to the methyltransferase superfamily. METL family. In terms of assembly, monomer. Interacts with SARS1/SerRS; interaction is mediated via tRNA(Ser) and is required for N(3)-methylcytidine methylation.

The protein localises to the cytoplasm. It is found in the nucleus. It carries out the reaction cytidine(32) in tRNA(Ser) + S-adenosyl-L-methionine = N(3)-methylcytidine(32) in tRNA(Ser) + S-adenosyl-L-homocysteine + H(+). In terms of biological role, S-adenosyl-L-methionine-dependent methyltransferase that mediates N(3)-methylcytidine modification of residue 32 of the tRNA anticodon loop of tRNA(Ser), including tRNA(Ser)(UGA) and tRNA(Ser)(GCU). Interaction with SARS1/SerRS is required for N(3)-methylcytidine methylation. In Rattus norvegicus (Rat), this protein is tRNA N(3)-cytidine methyltransferase METTL6 (Mettl6).